A 375-amino-acid polypeptide reads, in one-letter code: MDATLPSIHTALKILGPNNVSVSENTALPVIQPLDILVRVACISINHVDAKSADMSPSPGATSGTDFSGVVVAIGSDVPKESFRSTNGMKPVQIGDRVFGGVFGNNPLRRDNGAFAEYVAVPARLVWHIPGGMDFSTASTLGAAVATVGLSLFQYMQLPMPTTTSTASPDNGPFVLVYGGGTATGAMAIQVLKIAGFRPITTCSSASAGHATELGATATFDYRSPTCGAELREHTGDTLTLALDCITDTASMNICYEALGSSGGRYVALDSFPLRAHTRRSVVPDWVCTYSQFGHPIAWAAPYNLEARPEDLLTAEAWYVVAQKLIDQGLITPHPKEERLGGLAAIGEGMEAVRRGQIKGKKLVYPISNELCAAA.

Residue 48–51 participates in NADP(+) binding; the sequence is VDAK. 143 to 150 is a substrate binding site; it reads AAVATVGL. NADP(+) contacts are provided by residues 204–207, Tyr222, and 269–270; these read SSAS and LD. Residue 289 to 293 participates in substrate binding; sequence TYSQF. Residue 358 to 359 coordinates NADP(+); it reads IK.

This sequence belongs to the zinc-containing alcohol dehydrogenase family. Monomer.

The catalysed reaction is N-[(4E,6E,10S,12Z,14E)-6,10-dimethyl-3-oxohexadeca-4,6,12,14-tetraenoyl]-L-tyrosyl-[ACP] = (3E,5S)-3-[(2E,4E,8S,10E,12Z)-1-hydroxy-4,8-dimethyltetradeca-2,4,10,12-tetraen-1-ylidene]-5-[(4-hydroxyphenyl)methyl]pyrrolidine-2,4-dione + holo-[ACP] + H(+). It participates in mycotoxin biosynthesis. Its function is as follows. Trans-enoyl reductase; part of the gene cluster that mediates the biosynthesis of ilicicolin H, a 4-hydroxy-2-pyridonealkaloid that has potent and broad antifungal activities by inhibiting the mitochondrial respiration chain. IccB collaborates with the hybrid PKS-NRPS synthetase iccA to assemble the backbone of ilicicolin H. The PKS portion of iccA and trans-acting enoyl reductase iccB work together to construct an octaketide, and two methyl groups are introduced by the MT domain of iccA during the chain assembly. The nascent chain is then condensed with tyrosine, catalyzed by the iliA C domain, and the resulting PKS-NRPS hybrid is offloaded by the iliA RED domain to form an advanced tetramic acid intermediate. The biosynthesis of ilicicolin H starts with formation of the tetramic acid by the hybrid PKS-NRPS synthetase iccA with the partnering trans-enoyl reductase iccB since iccA lacks a designated enoylreductase (ER) domain. The cytochrome P450 monooxygenase iccC then catalyzes the ring expansion of the tetramate to the acyclic 2-pyridone. The pericyclase iccD further converts the acyclic 2-pyridone into 8-epi-ilicicolin H. Finally, the epimerase iccE converts 8-epi-ilicicolin H into ilicicolin H via epimerization. IccA to iccE are sufficient for ilicicolin H biosynthesis and the roles of the remaining enzymes, iccF, iccG and iccH within the pathway have still to be determined. The polypeptide is Trans-enoyl reductase iccB (Talaromyces variabilis (Penicillium variabile)).